The chain runs to 128 residues: Holo-[acyl-carrier-protein] synthase (128 aa).

Mg(2+) contacts are provided by D8 and E60.

This sequence belongs to the P-Pant transferase superfamily. AcpS family. Requires Mg(2+) as cofactor.

The protein localises to the cytoplasm. It catalyses the reaction apo-[ACP] + CoA = holo-[ACP] + adenosine 3',5'-bisphosphate + H(+). In terms of biological role, transfers the 4'-phosphopantetheine moiety from coenzyme A to a Ser of acyl-carrier-protein. The sequence is that of Holo-[acyl-carrier-protein] synthase from Anaeromyxobacter dehalogenans (strain 2CP-C).